The chain runs to 210 residues: NAD(P)H-quinone oxidoreductase subunit I (210 aa).

2 consecutive 4Fe-4S ferredoxin-type domains span residues 55 to 84 (GRIH…VDWV) and 95 to 124 (RNYS…MTEE). [4Fe-4S] cluster contacts are provided by Cys-64, Cys-67, Cys-70, Cys-74, Cys-104, Cys-107, Cys-110, and Cys-114.

The protein belongs to the complex I 23 kDa subunit family. NDH-1 is composed of at least 11 different subunits. Requires [4Fe-4S] cluster as cofactor.

Its subcellular location is the cellular thylakoid membrane. The enzyme catalyses a plastoquinone + NADH + (n+1) H(+)(in) = a plastoquinol + NAD(+) + n H(+)(out). The catalysed reaction is a plastoquinone + NADPH + (n+1) H(+)(in) = a plastoquinol + NADP(+) + n H(+)(out). NDH-1 shuttles electrons from an unknown electron donor, via FMN and iron-sulfur (Fe-S) centers, to quinones in the respiratory and/or the photosynthetic chain. The immediate electron acceptor for the enzyme in this species is believed to be plastoquinone. Couples the redox reaction to proton translocation, and thus conserves the redox energy in a proton gradient. This is NAD(P)H-quinone oxidoreductase subunit I from Synechococcus sp. (strain CC9902).